Here is a 313-residue protein sequence, read N- to C-terminus: Cytosolic Fe-S cluster assembly factor NUBP1 homolog (313 aa).

Residues 1-25 (MSDVPEDANAGCPGTGSAGAGKASG) are disordered. Residues Cys12, Cys26, Cys29, and Cys35 each coordinate [4Fe-4S] cluster. 66–73 (GKGGVGKS) lines the ATP pocket. The [4Fe-4S] cluster site is built by Cys240 and Cys243.

Belongs to the Mrp/NBP35 ATP-binding proteins family. NUBP1/NBP35 subfamily. As to quaternary structure, heterotetramer of 2 NUBP1 and 2 NUBP2 chains. The cofactor is [4Fe-4S] cluster.

The protein resides in the cytoplasm. Its subcellular location is the cell projection. Functionally, component of the cytosolic iron-sulfur (Fe/S) protein assembly (CIA) machinery. Required for maturation of extramitochondrial Fe-S proteins. The NUBP1-NUBP2 heterotetramer forms a Fe-S scaffold complex, mediating the de novo assembly of an Fe-S cluster and its transfer to target apoproteins. Regulates cilium formation and structure. This is Cytosolic Fe-S cluster assembly factor NUBP1 homolog from Caenorhabditis briggsae.